The following is a 338-amino-acid chain: MHIGTTLTNYIIETQRNLPEATGEFTGLLNDISVACKRIADLVNKGDLVGMLGSADSENVQGETQKKLDVVTNEVFIEALTQNGHIAGLVSEEMDDIYTLPNPSQRGRYLLLCDPLDGSSNIDVNVSVGTIFSIVRAPQGSENPSAGDFLQHGTEQVAAGYCLYGPSTILVLAVKGQGVQMFTLNRDFGEFILTRKDVQIPEDTQEFAINVSNQRHWEEPVQRYIDECLQGKEGPRGQDFNMRWVASMVAEVHRILCRGGVFMYPLDAKIKAKGQNGRLRLMYEANPMSLIVEQAGGGATTGRQRILELDPSDIHERAPVVLGSRNEVERIARYHQEG.

Mg(2+) contacts are provided by Glu92, Asp114, Leu116, and Asp117. Substrate contacts are provided by residues 117 to 120 (DGSS) and Asn210. Glu284 contacts Mg(2+).

Belongs to the FBPase class 1 family. Homotetramer. Requires Mg(2+) as cofactor.

It localises to the cytoplasm. It carries out the reaction beta-D-fructose 1,6-bisphosphate + H2O = beta-D-fructose 6-phosphate + phosphate. Its pathway is carbohydrate biosynthesis; gluconeogenesis. The protein is Fructose-1,6-bisphosphatase class 1 of Halorhodospira halophila (strain DSM 244 / SL1) (Ectothiorhodospira halophila (strain DSM 244 / SL1)).